The primary structure comprises 343 residues: Calcium/calmodulin-dependent protein kinase type 1B (343 aa).

The 256-residue stretch at 15-270 folds into the Protein kinase domain; sequence YEIRERLGSG…CQQALRHLWI (256 aa). ATP is bound by residues 21–29 and Lys44; that span reads LGSGAFSEV. The active-site Proton acceptor is Asp136. Residues 290–311 are calmodulin-binding; that stretch reads KNFARTHWKRAFNATSFLRHIR. The interval 319–343 is disordered; it reads GEGASEQGMARHSHSGLRAGQPPKW.

It belongs to the protein kinase superfamily. CAMK Ser/Thr protein kinase family. CaMK subfamily. In terms of processing, phosphorylated by CAMKK1.

It is found in the cytoplasm. It localises to the nucleus. It carries out the reaction L-seryl-[protein] + ATP = O-phospho-L-seryl-[protein] + ADP + H(+). The enzyme catalyses L-threonyl-[protein] + ATP = O-phospho-L-threonyl-[protein] + ADP + H(+). Its activity is regulated as follows. Activated by Ca(2+)/calmodulin. Functionally, calcium/calmodulin-dependent protein kinase belonging to a proposed calcium-triggered signaling cascade. In vitro phosphorylates CREB1 and SYN1/synapsin I. Phosphorylates and activates CAMK1. In Homo sapiens (Human), this protein is Calcium/calmodulin-dependent protein kinase type 1B (PNCK).